A 448-amino-acid chain; its full sequence is Iroquois-class homeodomain protein irx-3 (448 aa).

Positions 108-170 form a DNA-binding region, homeobox; TALE-type; it reads DPSRPKNATR…NARRRLKKEN (63 aa). Disordered regions lie at residues 171–250 and 387–410; these read KMTW…NAPE and SGTA…DRSS. Acidic residues predominate over residues 195 to 222; the sequence is KHEDDEEIDLENIDTEDIESKEDLDDPD. Positions 223–237 are enriched in basic and acidic residues; it reads TDIHSDSKTDARSDS. Over residues 238–248 the composition is skewed to acidic residues; it reads EASDGFEDLNA. Over residues 396-406 the composition is skewed to basic and acidic residues; that stretch reads AEPKHSTDSLT.

The protein belongs to the TALE/IRO homeobox family. Expressed in the neural plate in overlapping patterns with other irx members, which all share an anterior border of expression. Outside the nervous system and at tailbud stages, expressed in the developing otic vesicle, branchial arches, prospective heart region and pronephros.

It localises to the nucleus. Acts partially redundantly with other irx members in neural patterning. Required for formation of the posterior forebrain, midbrain, hindbrain, and to a lesser extent, spinal cord. Both up-regulates and down-regulates gene expression during neural development. Acts early in neural plate development to induce proneural gene expression and specify a neural precursor state. Also up-regulates repressors that prevent neuronal differentiation. Required during at least two stages of pronephros kidney development; during neurula stages, maintains transcription of key renal genes to define the size and identity of the pronephric anlage, probably in part through regulation of bmp-signaling. Subsequently required for proper formation of the intermediate tubule segment of the pronephros. The sequence is that of Iroquois-class homeodomain protein irx-3 from Xenopus tropicalis (Western clawed frog).